An 891-amino-acid polypeptide reads, in one-letter code: Echinoderm microtubule-associated protein-like elp-1 (891 aa).

Over residues Asp-77 to Ser-88 the composition is skewed to polar residues. The tract at residues Asp-77–Val-167 is disordered. The span at Ser-104–Ser-117 shows a compositional bias: low complexity. Residues Lys-118–Glu-131 are compositionally biased toward polar residues. WD repeat units lie at residues Gly-330 to Val-401, Gly-404 to Glu-447, Asp-499 to Gln-537, Val-541 to Arg-579, Gly-626 to Ser-664, Glu-708 to Val-747, His-753 to Thr-792, Ser-816 to Gly-853, and Gly-859 to Leu-890.

Belongs to the WD repeat EMAP family.

The protein localises to the cytoplasm. Its subcellular location is the cytoskeleton. May modify the assembly dynamics of microtubules, such that microtubules are slightly longer, but more dynamic. This chain is Echinoderm microtubule-associated protein-like elp-1 (elp-1), found in Caenorhabditis elegans.